Here is a 519-residue protein sequence, read N- to C-terminus: Putative glucosylceramidase 4 (519 aa).

Residues Met1 to Ser24 form the signal peptide. The active-site Proton donor is Glu256. Glu361 serves as the catalytic Nucleophile.

This sequence belongs to the glycosyl hydrolase 30 family.

The enzyme catalyses a beta-D-glucosylceramide + H2O = an N-acyl-sphingoid base + D-glucose. The catalysed reaction is a beta-D-glucosyl-(1&lt;-&gt;1')-N-acylsphing-4-enine + H2O = an N-acylsphing-4-enine + D-glucose. It catalyses the reaction an N-acyl-1-beta-D-glucosyl-15-methylhexadecasphing-4-enine + H2O = an N-acyl-15-methylhexadecasphing-4-enine + D-glucose. The protein operates within lipid metabolism; sphingolipid metabolism. In terms of biological role, glucosylceramidase that catalyzes the hydrolysis of glucosylceramides into free ceramides and glucose. C.elegans contains specific sphingoid bases, which are unique or different in structure compared to the sphingoid bases found in other animals. Two examples of these distinctive compounds are: 15-methylhexadecasphinganine and 15-methylhexadecasphing-4-enine. The chain is Putative glucosylceramidase 4 (gba-4) from Caenorhabditis elegans.